Here is a 79-residue protein sequence, read N- to C-terminus: Sec-independent protein translocase protein TatA (79 aa).

Residues 1-21 (MGFSTTHLLIFLVIIIVIFGT) traverse the membrane as a helical segment. Residues 43 to 63 (KEGSDKAADAPAAAPQQVASS) form a disordered region. Residues 51-63 (DAPAAAPQQVASS) show a composition bias toward low complexity.

It belongs to the TatA/E family. In terms of assembly, the Tat system comprises two distinct complexes: a TatABC complex, containing multiple copies of TatA, TatB and TatC subunits, and a separate TatA complex, containing only TatA subunits. Substrates initially bind to the TatABC complex, which probably triggers association of the separate TatA complex to form the active translocon.

The protein localises to the cell inner membrane. Part of the twin-arginine translocation (Tat) system that transports large folded proteins containing a characteristic twin-arginine motif in their signal peptide across membranes. TatA could form the protein-conducting channel of the Tat system. This is Sec-independent protein translocase protein TatA from Albidiferax ferrireducens (strain ATCC BAA-621 / DSM 15236 / T118) (Rhodoferax ferrireducens).